A 968-amino-acid chain; its full sequence is uncharacterized protein (968 aa).

A helical transmembrane segment spans residues 12–32 (LIFIFSLFFLILFFLESSIGF).

To E.coli YtfN.

The protein localises to the membrane. This is an uncharacterized protein from Buchnera aphidicola subsp. Schizaphis graminum (strain Sg).